The sequence spans 241 residues: Uridylate kinase (241 aa).

Lys-11–Gly-14 contacts ATP. The involved in allosteric activation by GTP stretch occupies residues Gly-19–Gly-24. Gly-53 contributes to the UMP binding site. 2 residues coordinate ATP: Gly-54 and Arg-58. Residues Asp-74 and Thr-135–Thr-142 each bind UMP. Thr-162, Tyr-168, and Asp-171 together coordinate ATP.

It belongs to the UMP kinase family. In terms of assembly, homohexamer.

It is found in the cytoplasm. The enzyme catalyses UMP + ATP = UDP + ADP. It participates in pyrimidine metabolism; CTP biosynthesis via de novo pathway; UDP from UMP (UMPK route): step 1/1. Allosterically activated by GTP. Inhibited by UTP. Its function is as follows. Catalyzes the reversible phosphorylation of UMP to UDP. The polypeptide is Uridylate kinase (Wolinella succinogenes (strain ATCC 29543 / DSM 1740 / CCUG 13145 / JCM 31913 / LMG 7466 / NCTC 11488 / FDC 602W) (Vibrio succinogenes)).